The primary structure comprises 695 residues: F-box only protein 34 (695 aa).

3 disordered regions span residues 239–275 (GQSRGIPPAPEPFSAPETCEEPKEQENPETGRSQGEP), 316–373 (LTNG…CPSL), and 472–524 (GQDQ…PGGS). Positions 556–608 (QQYMACLPHHIIVKIFRLLPTLSLAILKCTCRYFKSIIEYYNIRPADSRWVRD) constitute an F-box domain.

In terms of assembly, directly interacts with SKP1 and CUL1.

Substrate-recognition component of the SCF (SKP1-CUL1-F-box protein)-type E3 ubiquitin ligase complex. The sequence is that of F-box only protein 34 (Fbxo34) from Mus musculus (Mouse).